Consider the following 237-residue polypeptide: Endoglucanase-1 (237 aa).

Positions 1–16 (MKAFHLLAALAGAAVA) are cleaved as a signal peptide. At Gln-17 the chain carries Pyrrolidone carboxylic acid.

The protein belongs to the glycosyl hydrolase 12 (cellulase H) family.

Its subcellular location is the secreted. It catalyses the reaction Endohydrolysis of (1-&gt;4)-beta-D-glucosidic linkages in cellulose, lichenin and cereal beta-D-glucans.. This chain is Endoglucanase-1, found in Aspergillus aculeatus.